Consider the following 739-residue polypeptide: Platelet endothelial cell adhesion molecule (739 aa).

An N-terminal signal peptide occupies residues 1–27; it reads MQLRWTQRGMMWLGALLTLLLCSSLKG. The Extracellular segment spans residues 28–599; it reads QENSFTINSI…TVRVYLPLEK (572 aa). Ig-like C2-type domains follow at residues 35–120, 145–213, and 236–315; these read NSIH…EKTT, GGVV…IFSG, and PKFH…SKVS. Residues Asn52, Asn84, and Asn151 are each glycosylated (N-linked (GlcNAc...) asparagine). Cys57 and Cys109 are disulfide-bonded. 2 cysteine pairs are disulfide-bonded: Cys152-Cys206 and Cys256-Cys304. N-linked (GlcNAc...) asparagine glycosylation is found at Asn301, Asn320, Asn356, Asn371, Asn435, Asn446, Asn453, Asn550, and Asn578. 3 Ig-like C2-type domains span residues 328 to 403, 424 to 493, and 499 to 590; these read PKLE…VQIT, GQTI…EVLR, and PVDE…NTLT. Intrachain disulfides connect Cys347–Cys386, Cys431–Cys476, and Cys522–Cys571. Residues 600-618 form a helical membrane-spanning segment; that stretch reads GLIAVVVIGVIIVTLVLGA. The Cytoplasmic portion of the chain corresponds to 619-739; sequence KCYFLKKAKA…SRTEGSLDGS (121 aa). Cys620 carries S-palmitoyl cysteine lipidation. Short sequence motifs (ITIM motif) lie at residues 687 to 692 and 712 to 717; these read VEYTEV and TVYSEI. Phosphotyrosine; by FER occurs at positions 689 and 714. Residues 708–730 form a membrane-bound segment which detaches upon phosphorylation region; it reads TETETVYSEIRKADPDFVENRYS. Residues 722–739 are may play a role in cytoprotective signaling; it reads PDFVENRYSRTEGSLDGS. A phosphoserine mark is found at Ser730 and Ser735.

As to quaternary structure, trans-homodimer (via Ig-like C2-type 1 and Ig-like C2-type 2 domains); trans-homodimerization is required for cell-cell interaction. Forms a complex with BDKRB2 and GNAQ. Interacts with BDKRB2 and GNAQ. Interacts with PTPN11; Tyr-714 is critical for PTPN11 recruitment. Interacts with FER. Interacts with CD177; the interaction is Ca(2+)-dependent; the interaction is direct. In terms of processing, phosphorylated on Ser and Tyr residues by src kinases after cellular activation. Upon activation, phosphorylated on Ser-730 which probably initiates the dissociation of the membrane-interaction segment (residues 708-730) from the cell membrane allowing the sequential phosphorylation of Tyr-714 and Tyr-689. Constitutively phosphorylated on Ser-735 in resting platelets. Phosphorylated on tyrosine residues by FER and FES in response to FCER1 activation. In endothelial cells Fyn mediates mechanical-force (stretch or pull) induced tyrosine phosphorylation. Palmitoylation by ZDHHC21 is necessary for cell surface expression in endothelial cells and enrichment in membrane rafts.

The protein localises to the cell membrane. Its subcellular location is the membrane raft. It is found in the cell junction. Its function is as follows. Cell adhesion molecule which is required for leukocyte transendothelial migration (TEM) under most inflammatory conditions. Tyr-689 plays a critical role in TEM and is required for efficient trafficking of PECAM1 to and from the lateral border recycling compartment (LBRC) and is also essential for the LBRC membrane to be targeted around migrating leukocytes. Trans-homophilic interaction may play a role in endothelial cell-cell adhesion via cell junctions. Heterophilic interaction with CD177 plays a role in transendothelial migration of neutrophils. Homophilic ligation of PECAM1 prevents macrophage-mediated phagocytosis of neighboring viable leukocytes by transmitting a detachment signal. Promotes macrophage-mediated phagocytosis of apoptotic leukocytes by tethering them to the phagocytic cells; PECAM1-mediated detachment signal appears to be disabled in apoptotic leukocytes. Modulates bradykinin receptor BDKRB2 activation. Regulates bradykinin- and hyperosmotic shock-induced ERK1/2 activation in endothelial cells. Induces susceptibility to atherosclerosis. The protein is Platelet endothelial cell adhesion molecule (PECAM1) of Bos taurus (Bovine).